The sequence spans 100 residues: Urease subunit gamma (100 aa).

This sequence belongs to the urease gamma subunit family. As to quaternary structure, heterotrimer of UreA (gamma), UreB (beta) and UreC (alpha) subunits. Three heterotrimers associate to form the active enzyme.

It is found in the cytoplasm. It catalyses the reaction urea + 2 H2O + H(+) = hydrogencarbonate + 2 NH4(+). The protein operates within nitrogen metabolism; urea degradation; CO(2) and NH(3) from urea (urease route): step 1/1. The sequence is that of Urease subunit gamma from Ralstonia pickettii (strain 12J).